The chain runs to 263 residues: Superoxide dismutase [Fe] 3, chloroplastic (263 aa).

The transit peptide at 1 to 41 (MSSCVVTTSCFYTISDSSIRLKSPKLLNLSNQQRRRSLRSR) directs the protein to the chloroplast. The Fe cation site is built by His-74, His-127, Asp-211, and His-215.

It belongs to the iron/manganese superoxide dismutase family. As to quaternary structure, homodimer. Heterodimer with FSD2. Interacts with MRL7. Requires Fe cation as cofactor.

It localises to the plastid. It is found in the chloroplast thylakoid. It carries out the reaction 2 superoxide + 2 H(+) = H2O2 + O2. With respect to regulation, activated by cpn20/cpn21 (in vitro). Its function is as follows. Destroys superoxide anion radicals which are normally produced within the cells and which are toxic to biological systems. Plays important role in chloroplast development, particularly in the maintenance of thylakoids membranes. Seems to act as a heterodimer with FSD2. The sequence is that of Superoxide dismutase [Fe] 3, chloroplastic from Arabidopsis thaliana (Mouse-ear cress).